Reading from the N-terminus, the 161-residue chain is Ribonuclease H (161 aa).

One can recognise an RNase H type-1 domain in the interval 3-144; it reads VLKQLSIFTD…CDTLARVAAE (142 aa). 4 residues coordinate Mg(2+): Asp12, Glu50, Asp72, and Asp136.

This sequence belongs to the RNase H family. Monomer. Mg(2+) serves as cofactor.

It is found in the cytoplasm. It catalyses the reaction Endonucleolytic cleavage to 5'-phosphomonoester.. Endonuclease that specifically degrades the RNA of RNA-DNA hybrids. This is Ribonuclease H from Shewanella woodyi (strain ATCC 51908 / MS32).